Reading from the N-terminus, the 276-residue chain is Ribosomal RNA small subunit methyltransferase A (276 aa).

Residues Asn28, Leu30, Gly55, Glu77, Asp103, and Asn124 each coordinate S-adenosyl-L-methionine.

Belongs to the class I-like SAM-binding methyltransferase superfamily. rRNA adenine N(6)-methyltransferase family. RsmA subfamily.

It localises to the cytoplasm. It catalyses the reaction adenosine(1518)/adenosine(1519) in 16S rRNA + 4 S-adenosyl-L-methionine = N(6)-dimethyladenosine(1518)/N(6)-dimethyladenosine(1519) in 16S rRNA + 4 S-adenosyl-L-homocysteine + 4 H(+). Functionally, specifically dimethylates two adjacent adenosines (A1518 and A1519) in the loop of a conserved hairpin near the 3'-end of 16S rRNA in the 30S particle. May play a critical role in biogenesis of 30S subunits. In Agrobacterium fabrum (strain C58 / ATCC 33970) (Agrobacterium tumefaciens (strain C58)), this protein is Ribosomal RNA small subunit methyltransferase A.